Consider the following 126-residue polypeptide: Arginine decarboxylase proenzyme (126 aa).

The active-site Schiff-base intermediate with substrate; via pyruvic acid is the Ser-74. At Ser-74 the chain carries Pyruvic acid (Ser); by autocatalysis. His-79 (proton acceptor; for processing activity) is an active-site residue. Residue Cys-94 is the Proton donor; for catalytic activity of the active site.

The protein belongs to the prokaryotic AdoMetDC family. Type 1 subfamily. As to quaternary structure, heterooctamer of four alpha and four beta chains arranged as a tetramer of alpha/beta heterodimers. It depends on pyruvate as a cofactor. Is synthesized initially as an inactive proenzyme. Formation of the active enzyme involves a self-maturation process in which the active site pyruvoyl group is generated from an internal serine residue via an autocatalytic post-translational modification. Two non-identical subunits are generated from the proenzyme in this reaction, and the pyruvate is formed at the N-terminus of the alpha chain, which is derived from the carboxyl end of the proenzyme. The post-translation cleavage follows an unusual pathway, termed non-hydrolytic serinolysis, in which the side chain hydroxyl group of the serine supplies its oxygen atom to form the C-terminus of the beta chain, while the remainder of the serine residue undergoes an oxidative deamination to produce ammonia and the pyruvoyl group blocking the N-terminus of the alpha chain.

The catalysed reaction is L-arginine + H(+) = agmatine + CO2. It participates in amine and polyamine biosynthesis; agmatine biosynthesis; agmatine from L-arginine: step 1/1. Its function is as follows. Specifically catalyzes the decarboxylation of L-arginine to agmatine. Has no S-adenosylmethionine decarboxylase (AdoMetDC) activity. This Pyrobaculum islandicum (strain DSM 4184 / JCM 9189 / GEO3) protein is Arginine decarboxylase proenzyme.